The chain runs to 214 residues: MSTLHKVKAYFGMAPMDDYEDEYYDDRAPSRGFPRPRFDDGYGRYDGDDYDDPRREPADYPPPAGYRGGYAEESRYGAVHPREFERPEMGRPRFGSWLRNSTRGALAMDPRRMAMMFEEGHPLSKITTLRPKDYSEARTIGERFRDGTPVIMDLVSMDNADAKRLVDFAAGLAFALRGSFDKVATKVFLLSPADVDVSPEERRRIAETGFYAYQ.

The tract at residues 23-70 is disordered; that stretch reads YYDDRAPSRGFPRPRFDDGYGRYDGDDYDDPRREPADYPPPAGYRGGY. Residues 36–58 show a composition bias toward basic and acidic residues; sequence PRFDDGYGRYDGDDYDDPRREPA.

The protein belongs to the SepF family. In terms of assembly, homodimer. Interacts with FtsZ.

It is found in the cytoplasm. In terms of biological role, cell division protein that is part of the divisome complex and is recruited early to the Z-ring. Probably stimulates Z-ring formation, perhaps through the cross-linking of FtsZ protofilaments. Its function overlaps with FtsA. The sequence is that of Cell division protein SepF from Mycobacterium avium (strain 104).